Consider the following 367-residue polypeptide: Outer membrane protein P2 (367 aa).

A signal peptide spans 1–20 (MKKTLAALIVGAFAASAANA).

The protein belongs to the Gram-negative porin family. As to quaternary structure, homotrimer.

It localises to the cell outer membrane. Functionally, forms pores that allow passive diffusion of small molecules across the outer membrane. The polypeptide is Outer membrane protein P2 (ompP2) (Haemophilus influenzae).